A 146-amino-acid chain; its full sequence is SsrA-binding protein (146 aa).

Positions 127 to 139 (KRQTIKDRDNSRE) are enriched in basic and acidic residues. Residues 127 to 146 (KRQTIKDRDNSREARKHIRV) form a disordered region.

Belongs to the SmpB family.

The protein localises to the cytoplasm. Required for rescue of stalled ribosomes mediated by trans-translation. Binds to transfer-messenger RNA (tmRNA), required for stable association of tmRNA with ribosomes. tmRNA and SmpB together mimic tRNA shape, replacing the anticodon stem-loop with SmpB. tmRNA is encoded by the ssrA gene; the 2 termini fold to resemble tRNA(Ala) and it encodes a 'tag peptide', a short internal open reading frame. During trans-translation Ala-aminoacylated tmRNA acts like a tRNA, entering the A-site of stalled ribosomes, displacing the stalled mRNA. The ribosome then switches to translate the ORF on the tmRNA; the nascent peptide is terminated with the 'tag peptide' encoded by the tmRNA and targeted for degradation. The ribosome is freed to recommence translation, which seems to be the essential function of trans-translation. This is SsrA-binding protein from Malacoplasma penetrans (strain HF-2) (Mycoplasma penetrans).